The primary structure comprises 354 residues: Inactive ADP-ribosyltransferase ARH2 (354 aa).

Serine 27 carries the post-translational modification Phosphoserine.

Belongs to the ADP-ribosylglycohydrolase family.

It is found in the cytoplasm. The protein localises to the myofibril. The protein resides in the sarcomere. Its function is as follows. Required for myofibril assembly and outgrowth of the cardiac chambers in the developing heart. Appears to be catalytically inactive, showing no activity against O-acetyl-ADP-ribose. This chain is Inactive ADP-ribosyltransferase ARH2 (ADPRHL1), found in Homo sapiens (Human).